We begin with the raw amino-acid sequence, 283 residues long: Polyamine aminopropyltransferase (283 aa).

Residues 5-238 (TTWIDEYHKG…GIWSWTFASS (234 aa)) form the PABS domain. Q32 contacts S-methyl-5'-thioadenosine. Spermidine contacts are provided by H63 and D87. S-methyl-5'-thioadenosine contacts are provided by residues E107 and 139–140 (DG). D158 functions as the Proton acceptor in the catalytic mechanism. Residue 158–161 (DSSD) coordinates spermidine.

Belongs to the spermidine/spermine synthase family. Homodimer or homotetramer.

It localises to the cytoplasm. It catalyses the reaction S-adenosyl 3-(methylsulfanyl)propylamine + putrescine = S-methyl-5'-thioadenosine + spermidine + H(+). Its pathway is amine and polyamine biosynthesis; spermidine biosynthesis; spermidine from putrescine: step 1/1. Catalyzes the irreversible transfer of a propylamine group from the amino donor S-adenosylmethioninamine (decarboxy-AdoMet) to putrescine (1,4-diaminobutane) to yield spermidine. This Prochlorococcus marinus (strain MIT 9215) protein is Polyamine aminopropyltransferase.